The chain runs to 78 residues: Exodeoxyribonuclease 7 small subunit (78 aa).

The protein belongs to the XseB family. As to quaternary structure, heterooligomer composed of large and small subunits.

Its subcellular location is the cytoplasm. It carries out the reaction Exonucleolytic cleavage in either 5'- to 3'- or 3'- to 5'-direction to yield nucleoside 5'-phosphates.. Bidirectionally degrades single-stranded DNA into large acid-insoluble oligonucleotides, which are then degraded further into small acid-soluble oligonucleotides. The chain is Exodeoxyribonuclease 7 small subunit from Mycobacterium leprae (strain TN).